Reading from the N-terminus, the 494-residue chain is Anaerobic nitric oxide reductase flavorubredoxin (494 aa).

The tract at residues 30–210 is zinc metallo-hydrolase; sequence TKGTSYNSYL…PFSALVTAKI (181 aa). Residues H79, E81, D83, H147, D166, and H227 each contribute to the Fe cation site. Positions 254-393 constitute a Flavodoxin-like domain; sequence ITIFYDSMSN…ECREHGQQIA (140 aa). FMN is bound by residues 260–264 and 342–369; these read SMSNN and AFGSYGWNGGAVDRIHARLTDAGFETAI. In terms of domain architecture, Rubredoxin-like spans 441–492; that stretch reads CQCMVCTVCNWVYDPAKGEPNQGIEVGTTWADVPDYFLCPECHLGKDVFVEY. Fe cation is bound by residues C446, C449, C479, and C482.

It in the N-terminal section; belongs to the zinc metallo-hydrolase group 3 family. Homotetramer. Fe cation serves as cofactor. FMN is required as a cofactor.

The protein localises to the cytoplasm. Its pathway is nitrogen metabolism; nitric oxide reduction. Anaerobic nitric oxide reductase; uses NADH to detoxify nitric oxide (NO), protecting several 4Fe-4S NO-sensitive enzymes. Has at least 2 reductase partners, only one of which (NorW, flavorubredoxin reductase) has been identified. NO probably binds to the di-iron center; electrons enter from the NorW at rubredoxin and are transferred sequentially to the FMN center and the di-iron center. Also able to function as an aerobic oxygen reductase. The sequence is that of Anaerobic nitric oxide reductase flavorubredoxin from Vibrio vulnificus (strain YJ016).